We begin with the raw amino-acid sequence, 196 residues long: MKKLTVYLATTNPHKVEEIKMIAPEWMEILPSPEKIEVVEDGETFLENSVKKAVVYGKKLKHPVMADDSGLVIYSLGGFPGVMSARFMEEHSYKEKMRTILKMLEGKDRRAAFVCSATFFDPVENTLISVEDRVEGRIANEIRGTGGFGYDPFFIPDGYDKTFGEIPHLKEKISHRSKAFRKLFSVLEKILESENR.

Residue 10-15 (TTNPHK) participates in substrate binding. The active-site Proton acceptor is the D68. D68 contacts Mg(2+). Substrate-binding positions include S69, 148 to 151 (FGYD), and 175 to 176 (HR).

This sequence belongs to the HAM1 NTPase family. As to quaternary structure, homodimer. It depends on Mg(2+) as a cofactor.

The enzyme catalyses XTP + H2O = XMP + diphosphate + H(+). The catalysed reaction is dITP + H2O = dIMP + diphosphate + H(+). It carries out the reaction ITP + H2O = IMP + diphosphate + H(+). Its function is as follows. Pyrophosphatase that catalyzes the hydrolysis of nucleoside triphosphates to their monophosphate derivatives, with a high preference for the non-canonical purine nucleotides XTP (xanthosine triphosphate), dITP (deoxyinosine triphosphate) and ITP. Seems to function as a house-cleaning enzyme that removes non-canonical purine nucleotides from the nucleotide pool, thus preventing their incorporation into DNA/RNA and avoiding chromosomal lesions. The chain is dITP/XTP pyrophosphatase from Thermotoga maritima (strain ATCC 43589 / DSM 3109 / JCM 10099 / NBRC 100826 / MSB8).